The sequence spans 407 residues: Phosphopentomutase (407 aa).

The Mn(2+) site is built by aspartate 10, aspartate 306, histidine 311, aspartate 347, histidine 348, and histidine 359.

It belongs to the phosphopentomutase family. Mn(2+) serves as cofactor.

It localises to the cytoplasm. The catalysed reaction is 2-deoxy-alpha-D-ribose 1-phosphate = 2-deoxy-D-ribose 5-phosphate. It catalyses the reaction alpha-D-ribose 1-phosphate = D-ribose 5-phosphate. It participates in carbohydrate degradation; 2-deoxy-D-ribose 1-phosphate degradation; D-glyceraldehyde 3-phosphate and acetaldehyde from 2-deoxy-alpha-D-ribose 1-phosphate: step 1/2. Functionally, isomerase that catalyzes the conversion of deoxy-ribose 1-phosphate (dRib-1-P) and ribose 1-phosphate (Rib-1-P) to deoxy-ribose 5-phosphate (dRib-5-P) and ribose 5-phosphate (Rib-5-P), respectively. The protein is Phosphopentomutase of Buchnera aphidicola subsp. Acyrthosiphon pisum (strain 5A).